A 495-amino-acid polypeptide reads, in one-letter code: Cornulin (495 aa).

Positions 49–84 constitute an EF-hand domain; that stretch reads HDPATVDEVLRLLDEDHTGTVEFKEFLVLVFKVAQA. Positions 62, 64, 66, 68, and 73 each coordinate Ca(2+). Disordered regions lie at residues 96–439 and 460–481; these read ACGS…TVVG and LHTS…KRGI. The segment covering 99–110 has biased composition (polar residues); it reads SQESGSLHSGAS. A compositionally biased stretch (low complexity) spans 137 to 151; that stretch reads HRQSQQGSRGQNRPG. Polar residues predominate over residues 152 to 194; sequence VQTQGQATGSAWVSSYDRQAESQSQERISPQIQLSGQTEQTQK. Basic and acidic residues predominate over residues 196–222; the sequence is GEGKRNQTTEMRPERQPQTREQDRAHQ. Residues 226–242 are compositionally biased toward low complexity; the sequence is TVTGSGTQTQAGATQTV. Composition is skewed to polar residues over residues 243-282 and 290-303; these read EQDS…SQAV and QAGT…QTVE. Residues 307-324 are compositionally biased toward low complexity; sequence SHQTGSTSTQTQESTNGQ. A compositionally biased stretch (polar residues) spans 334-355; it reads GRSQTSQAVTGGHTQIQAGSHT. Over residues 374–385 the composition is skewed to low complexity; the sequence is QGQTQTQPGSGQ. Composition is skewed to polar residues over residues 403–420 and 460–473; these read QAQT…WSST and LHTS…QDAA.

Belongs to the S100-fused protein family. In terms of assembly, homodimer. In terms of tissue distribution, expressed in the basal skin layer (at protein level). Squamous epithelia cell-specific. Expressed in the esophagus (periphery of the cells of the granular and the upper spinous layers), foreskin (granular and lower cornified cells), scalp skin (granular layer), inner root sheath of the hair follicle and in primary keratinocytes (at protein level). Expressed in the squamous epithelium of the cervix, esophagus, foreskin and larynx. Expressed in the fetal bladder and scalp skin. Expressed at very low levels in the lung, kidney, uterus, skeletal muscle, heart and fetal brain. Undetectable or barely detectable in esophageal and oral squamous cell carcinoma compared with the matched adjacent normal esophageal mucosa. Undetectable or barely detectable in larynx and esophagus from patients with pH-documented laryngopharyngeal reflux (LPR).

The protein resides in the cytoplasm. Its function is as follows. Promotes cell proliferation, G1/S cell cycle progression and induces expression of the cell cycle regulator CCND1. Regulates proliferation induced by pro-inflammatory cytokine response via activation of NFKB1 and PI3K/AKT signaling pathways. This is Cornulin (CRNN) from Homo sapiens (Human).